Here is a 277-residue protein sequence, read N- to C-terminus: Pristinamycin IIA synthase subunit B (277 aa).

Heterodimer of two subunits, SnaA and SnaB. Requires FMN as cofactor.

Functionally, catalyzes the oxidation of the proline residue of pristinamycin IIB (PIIB) to pristinamycin IIA (PIIA). The protein is Pristinamycin IIA synthase subunit B (snaB) of Streptomyces pristinaespiralis.